The following is a 177-amino-acid chain: Large ribosomal subunit protein uL10 (177 aa).

It belongs to the universal ribosomal protein uL10 family. As to quaternary structure, part of the ribosomal stalk of the 50S ribosomal subunit. The N-terminus interacts with L11 and the large rRNA to form the base of the stalk. The C-terminus forms an elongated spine to which L12 dimers bind in a sequential fashion forming a multimeric L10(L12)X complex.

Its function is as follows. Forms part of the ribosomal stalk, playing a central role in the interaction of the ribosome with GTP-bound translation factors. This chain is Large ribosomal subunit protein uL10, found in Xanthomonas oryzae pv. oryzae (strain MAFF 311018).